A 323-amino-acid polypeptide reads, in one-letter code: Thiamine-monophosphate kinase (323 aa).

4 residues coordinate Mg(2+): D30, S45, T46, and D47. H54 is a binding site for substrate. Mg(2+) contacts are provided by D75 and D122. ATP contacts are provided by residues 121–122 and R146; that span reads GD. D212 lines the Mg(2+) pocket. S214 contributes to the ATP binding site. A Mg(2+)-binding site is contributed by D215. Substrate contacts are provided by E263 and F319.

It belongs to the thiamine-monophosphate kinase family.

The catalysed reaction is thiamine phosphate + ATP = thiamine diphosphate + ADP. It participates in cofactor biosynthesis; thiamine diphosphate biosynthesis; thiamine diphosphate from thiamine phosphate: step 1/1. Functionally, catalyzes the ATP-dependent phosphorylation of thiamine-monophosphate (TMP) to form thiamine-pyrophosphate (TPP), the active form of vitamin B1. The polypeptide is Thiamine-monophosphate kinase (Buchnera aphidicola subsp. Schizaphis graminum (strain Sg)).